Reading from the N-terminus, the 108-residue chain is Small ribosomal subunit protein bS18 (108 aa).

Polar residues predominate over residues M1 to I12. Positions M1 to K33 are disordered.

This sequence belongs to the bacterial ribosomal protein bS18 family. As to quaternary structure, part of the 30S ribosomal subunit. Forms a tight heterodimer with protein bS6.

Binds as a heterodimer with protein bS6 to the central domain of the 16S rRNA, where it helps stabilize the platform of the 30S subunit. This chain is Small ribosomal subunit protein bS18, found in Mycoplasmoides gallisepticum (strain R(low / passage 15 / clone 2)) (Mycoplasma gallisepticum).